A 161-amino-acid chain; its full sequence is Phosphopantetheine adenylyltransferase (161 aa).

Thr-9 contacts substrate. Residues 9 to 10 (TF) and His-17 each bind ATP. Residues Lys-41, Leu-73, and Arg-87 each contribute to the substrate site. Residues 88 to 90 (GLR), Glu-98, and 123 to 129 (YQFISGT) each bind ATP.

Belongs to the bacterial CoaD family. As to quaternary structure, homohexamer. It depends on Mg(2+) as a cofactor.

It localises to the cytoplasm. The enzyme catalyses (R)-4'-phosphopantetheine + ATP + H(+) = 3'-dephospho-CoA + diphosphate. The protein operates within cofactor biosynthesis; coenzyme A biosynthesis; CoA from (R)-pantothenate: step 4/5. Functionally, reversibly transfers an adenylyl group from ATP to 4'-phosphopantetheine, yielding dephospho-CoA (dPCoA) and pyrophosphate. This Janthinobacterium sp. (strain Marseille) (Minibacterium massiliensis) protein is Phosphopantetheine adenylyltransferase.